Reading from the N-terminus, the 317-residue chain is Acetyl-coenzyme A carboxylase carboxyl transferase subunit alpha (317 aa).

Residues 40 to 293 (LEGRVRDAMV…EAVIGDALKE (254 aa)) enclose the CoA carboxyltransferase C-terminal domain.

Belongs to the AccA family. As to quaternary structure, acetyl-CoA carboxylase is a heterohexamer composed of biotin carboxyl carrier protein (AccB), biotin carboxylase (AccC) and two subunits each of ACCase subunit alpha (AccA) and ACCase subunit beta (AccD).

It is found in the cytoplasm. It carries out the reaction N(6)-carboxybiotinyl-L-lysyl-[protein] + acetyl-CoA = N(6)-biotinyl-L-lysyl-[protein] + malonyl-CoA. Its pathway is lipid metabolism; malonyl-CoA biosynthesis; malonyl-CoA from acetyl-CoA: step 1/1. Its function is as follows. Component of the acetyl coenzyme A carboxylase (ACC) complex. First, biotin carboxylase catalyzes the carboxylation of biotin on its carrier protein (BCCP) and then the CO(2) group is transferred by the carboxyltransferase to acetyl-CoA to form malonyl-CoA. In Sinorhizobium medicae (strain WSM419) (Ensifer medicae), this protein is Acetyl-coenzyme A carboxylase carboxyl transferase subunit alpha.